We begin with the raw amino-acid sequence, 425 residues long: 3-deoxy-D-manno-octulosonic acid transferase (425 aa).

Residues 3-23 form a helical; Signal-anchor membrane-spanning segment; it reads ELLYTALLYLIQPLIWIRLWV. Catalysis depends on glutamate 60, which acts as the Proton acceptor. CMP contacts are provided by residues 268–269, 309–311, and 335–338; these read PR, MGE, and NPLE.

The protein belongs to the glycosyltransferase group 1 family. Glycosyltransferase 30 subfamily.

It localises to the cell inner membrane. It carries out the reaction lipid IVA (E. coli) + CMP-3-deoxy-beta-D-manno-octulosonate = alpha-Kdo-(2-&gt;6)-lipid IVA (E. coli) + CMP + H(+). The enzyme catalyses alpha-Kdo-(2-&gt;6)-lipid IVA (E. coli) + CMP-3-deoxy-beta-D-manno-octulosonate = alpha-Kdo-(2-&gt;4)-alpha-Kdo-(2-&gt;6)-lipid IVA (E. coli) + CMP + H(+). It participates in glycolipid biosynthesis; KDO(2)-lipid A biosynthesis; KDO(2)-lipid A from CMP-3-deoxy-D-manno-octulosonate and lipid IV(A): step 1/4. The protein operates within glycolipid biosynthesis; KDO(2)-lipid A biosynthesis; KDO(2)-lipid A from CMP-3-deoxy-D-manno-octulosonate and lipid IV(A): step 2/4. Its pathway is bacterial outer membrane biogenesis; LPS core biosynthesis. Functionally, involved in lipopolysaccharide (LPS) biosynthesis. Catalyzes the transfer of two 3-deoxy-D-manno-octulosonate (Kdo) residues from CMP-Kdo to lipid IV(A), the tetraacyldisaccharide-1,4'-bisphosphate precursor of lipid A. The polypeptide is 3-deoxy-D-manno-octulosonic acid transferase (waaA) (Escherichia coli O157:H7).